A 455-amino-acid polypeptide reads, in one-letter code: Bifunctional protein GlmU (455 aa).

The pyrophosphorylase stretch occupies residues 1–226; it reads MGLSVVILAA…EFEILGVNDR (226 aa). UDP-N-acetyl-alpha-D-glucosamine contacts are provided by residues 8 to 11, K22, Q73, 78 to 79, 99 to 101, G136, E151, N166, and N224; these read LAAG, GT, and YGD. D101 provides a ligand contact to Mg(2+). N224 contacts Mg(2+). Positions 227–247 are linker; that stretch reads TQLASLERVWQRNVAEKIMAK. Residues 248 to 455 are N-acetyltransferase; sequence GVSIADPNRF…WQRSVKKTDK (208 aa). UDP-N-acetyl-alpha-D-glucosamine-binding residues include R330 and K348. H360 functions as the Proton acceptor in the catalytic mechanism. Positions 363 and 374 each coordinate UDP-N-acetyl-alpha-D-glucosamine. Acetyl-CoA is bound by residues A377, 383–384, S402, A420, and R437; that span reads NY.

This sequence in the N-terminal section; belongs to the N-acetylglucosamine-1-phosphate uridyltransferase family. It in the C-terminal section; belongs to the transferase hexapeptide repeat family. As to quaternary structure, homotrimer. Requires Mg(2+) as cofactor.

It localises to the cytoplasm. It catalyses the reaction alpha-D-glucosamine 1-phosphate + acetyl-CoA = N-acetyl-alpha-D-glucosamine 1-phosphate + CoA + H(+). The enzyme catalyses N-acetyl-alpha-D-glucosamine 1-phosphate + UTP + H(+) = UDP-N-acetyl-alpha-D-glucosamine + diphosphate. It participates in nucleotide-sugar biosynthesis; UDP-N-acetyl-alpha-D-glucosamine biosynthesis; N-acetyl-alpha-D-glucosamine 1-phosphate from alpha-D-glucosamine 6-phosphate (route II): step 2/2. Its pathway is nucleotide-sugar biosynthesis; UDP-N-acetyl-alpha-D-glucosamine biosynthesis; UDP-N-acetyl-alpha-D-glucosamine from N-acetyl-alpha-D-glucosamine 1-phosphate: step 1/1. The protein operates within bacterial outer membrane biogenesis; LPS lipid A biosynthesis. Catalyzes the last two sequential reactions in the de novo biosynthetic pathway for UDP-N-acetylglucosamine (UDP-GlcNAc). The C-terminal domain catalyzes the transfer of acetyl group from acetyl coenzyme A to glucosamine-1-phosphate (GlcN-1-P) to produce N-acetylglucosamine-1-phosphate (GlcNAc-1-P), which is converted into UDP-GlcNAc by the transfer of uridine 5-monophosphate (from uridine 5-triphosphate), a reaction catalyzed by the N-terminal domain. The chain is Bifunctional protein GlmU from Francisella tularensis subsp. holarctica (strain OSU18).